The sequence spans 395 residues: Putative F-box protein At5g42430 (395 aa).

The F-box domain occupies 4–53 (EENSDSIPIDLILEILSRLPAKSITRFHCVSKLWGSMLCRPYFNELFLTI).

The sequence is that of Putative F-box protein At5g42430 from Arabidopsis thaliana (Mouse-ear cress).